A 353-amino-acid chain; its full sequence is tRNA N(3)-cytidine methyltransferase METTL2 (353 aa).

The disordered stretch occupies residues 1–37; it reads MAAPVVAADSPVIENMPETAGGATENSAEAQKRPQFG. S-adenosyl-L-methionine-binding residues include W93, Y97, G165, D190, D216, and I237.

Belongs to the methyltransferase superfamily. METL family. Monomer.

The protein localises to the cytoplasm. It carries out the reaction cytidine(32) in tRNA(Thr) + S-adenosyl-L-methionine = N(3)-methylcytidine(32) in tRNA(Thr) + S-adenosyl-L-homocysteine + H(+). The enzyme catalyses cytidine(32) in tRNA(Arg)(CCU) + S-adenosyl-L-methionine = N(3)-methylcytidine(32) in tRNA(Arg)(CCU) + S-adenosyl-L-homocysteine + H(+). S-adenosyl-L-methionine-dependent methyltransferase that mediates N(3)-methylcytidine modification of residue 32 of the tRNA anticodon loop of tRNA(Thr)(UGU) and tRNA(Arg)(CCU). N(3)-methylcytidine methylation by mettl2a requires the N6-threonylcarbamoylation of tRNA (t6A37) by the EKC/KEOPS complex as prerequisite. The polypeptide is tRNA N(3)-cytidine methyltransferase METTL2 (mettl2a) (Danio rerio (Zebrafish)).